Reading from the N-terminus, the 326-residue chain is Probable cell division protein WhiA (326 aa).

A DNA-binding region (H-T-H motif) is located at residues 275–308 (SLDELGHHADPPMTKDAVAGRIRRLLAMADKKAV).

It belongs to the WhiA family.

In terms of biological role, involved in cell division and chromosome segregation. The sequence is that of Probable cell division protein WhiA from Clavibacter sepedonicus (Clavibacter michiganensis subsp. sepedonicus).